The following is a 55-amino-acid chain: MADKKEGGVHRFYKIEDGKTVKLRHICSRCGKGFFMAQHKDRRSCGKCGLTEFNQ.

Cys-27, Cys-30, Cys-45, and Cys-48 together coordinate Zn(2+). A C4-type zinc finger spans residues 27 to 48 (CSRCGKGFFMAQHKDRRSCGKC).

It belongs to the eukaryotic ribosomal protein eS31 family. In terms of assembly, part of the 30S ribosomal subunit. Zn(2+) is required as a cofactor.

This chain is Small ribosomal subunit protein eS31, found in Cenarchaeum symbiosum (strain A).